The primary structure comprises 367 residues: Glutamate 5-kinase 2 (367 aa).

Residue lysine 10 coordinates ATP. Residues serine 50, aspartate 136, and asparagine 148 each contribute to the substrate site. Residues 168–169 (TD) and 210–216 (TGGMATK) each bind ATP. In terms of domain architecture, PUA spans 275–353 (SGQIVIDAGA…KQIGELLDYD (79 aa)).

The protein belongs to the glutamate 5-kinase family.

It localises to the cytoplasm. The catalysed reaction is L-glutamate + ATP = L-glutamyl 5-phosphate + ADP. It functions in the pathway amino-acid biosynthesis; L-proline biosynthesis; L-glutamate 5-semialdehyde from L-glutamate: step 1/2. Catalyzes the transfer of a phosphate group to glutamate to form L-glutamate 5-phosphate. The chain is Glutamate 5-kinase 2 from Pseudoalteromonas translucida (strain TAC 125).